The chain runs to 155 residues: MAPK regulated corepressor interacting protein 2 (155 aa).

M1 is subject to N-acetylmethionine. The interval 1–59 (MYTITKGPSKLVAQRRTGPTQQQVESRLGELLKCRHSAPTPQHPRAQPPGPWPLSSPGP) is disordered. R35 is subject to Omega-N-methylarginine. The segment covering 46-56 (AQPPGPWPLSS) has biased composition (pro residues). Position 56 is a phosphoserine (S56). R60 carries the omega-N-methylarginine modification. A Phosphoserine modification is found at S77.

This sequence belongs to the MCRIP family. In terms of assembly, interacts with DDX6. Interacts with MCRIP1.

The protein localises to the cytoplasm. It localises to the stress granule. The protein resides in the nucleus. This Bos taurus (Bovine) protein is MAPK regulated corepressor interacting protein 2 (MCRIP2).